Consider the following 521-residue polypeptide: GMP synthase [glutamine-hydrolyzing] (521 aa).

One can recognise a Glutamine amidotransferase type-1 domain in the interval 9 to 203; that stretch reads KILILDFGSQ…VSDICQCKKN (195 aa). Cys-86 (nucleophile) is an active-site residue. Catalysis depends on residues His-177 and Glu-179. One can recognise a GMPS ATP-PPase domain in the interval 204 to 396; it reads WTTDNIITKL…LGLPTHMLNC (193 aa). 231-237 provides a ligand contact to ATP; that stretch reads SGGVDSS.

As to quaternary structure, homodimer.

The catalysed reaction is XMP + L-glutamine + ATP + H2O = GMP + L-glutamate + AMP + diphosphate + 2 H(+). It participates in purine metabolism; GMP biosynthesis; GMP from XMP (L-Gln route): step 1/1. Its function is as follows. Catalyzes the synthesis of GMP from XMP. In Vesicomyosocius okutanii subsp. Calyptogena okutanii (strain HA), this protein is GMP synthase [glutamine-hydrolyzing].